We begin with the raw amino-acid sequence, 491 residues long: Iota-carrageenase (491 aa).

The first 23 residues, 1–23 (MRLYFRKLWLTNLFLGGALASSA), serve as a signal peptide directing secretion. 4 disulfide bridges follow: Cys-269–Cys-298, Cys-336–Cys-360, Cys-408–Cys-476, and Cys-412–Cys-484.

This sequence belongs to the glycosyl hydrolase 82 family.

It is found in the secreted. It carries out the reaction Endohydrolysis of 1,4-beta-D-linkages between D-galactose 4-sulfate and 3,6-anhydro-D-galactose-2-sulfate in iota-carrageenans.. In terms of biological role, hydrolyzes iota-carrageenans, sulfated 1,3-alpha-1,4-beta galactans from red algal cell walls, with an inversion of anomeric configuration. Also active against hybrid iota-/nu-carrageenan, not active against kappa- or lambda-carrageenans. This is Iota-carrageenase from Alteromonas macleodii (Pseudoalteromonas macleodii).